Reading from the N-terminus, the 648-residue chain is Biosynthetic arginine decarboxylase (648 aa).

An N6-(pyridoxal phosphate)lysine modification is found at lysine 109. 291-301 (IDVGGGLGIDF) lines the substrate pocket.

This sequence belongs to the Orn/Lys/Arg decarboxylase class-II family. SpeA subfamily. Mg(2+) serves as cofactor. It depends on pyridoxal 5'-phosphate as a cofactor.

The enzyme catalyses L-arginine + H(+) = agmatine + CO2. In terms of biological role, catalyzes the biosynthesis of agmatine from arginine. The chain is Biosynthetic arginine decarboxylase from Prochlorococcus marinus subsp. pastoris (strain CCMP1986 / NIES-2087 / MED4).